We begin with the raw amino-acid sequence, 463 residues long: tRNA (guanine(10)-N(2))-methyltransferase TRMT11 (463 aa).

Position 2 is an N-acetylalanine (Ala-2).

The protein belongs to the class I-like SAM-binding methyltransferase superfamily. TRM11 methyltransferase family. Part of the heterodimeric TRMT11-TRM112 methyltransferase complex; this complex forms an active tRNA methyltransferase, where TRMT112 acts as an activator of the catalytic subunit TRMT11.

It localises to the cytoplasm. The enzyme catalyses guanosine(10) in tRNA + S-adenosyl-L-methionine = N(2)-methylguanosine(10) in tRNA + S-adenosyl-L-homocysteine + H(+). Functionally, catalytic subunit of the TRMT11-TRM112 methyltransferase complex, that specifically mediates the S-adenosyl-L-methionine-dependent N(2)-methylation of guanosine nucleotide at position 10 (m2G10) in tRNAs. This is one of the major tRNA (guanine-N(2))-methyltransferases. The protein is tRNA (guanine(10)-N(2))-methyltransferase TRMT11 of Rattus norvegicus (Rat).